A 419-amino-acid polypeptide reads, in one-letter code: Imidazolonepropionase (419 aa).

2 residues coordinate Fe(3+): histidine 82 and histidine 84. Zn(2+) contacts are provided by histidine 82 and histidine 84. The 4-imidazolone-5-propanoate site is built by arginine 91, tyrosine 154, and histidine 187. Tyrosine 154 is an N-formimidoyl-L-glutamate binding site. Histidine 252 is a Fe(3+) binding site. Histidine 252 contributes to the Zn(2+) binding site. Glutamate 255 lines the 4-imidazolone-5-propanoate pocket. Residue aspartate 326 participates in Fe(3+) binding. Zn(2+) is bound at residue aspartate 326. Residues asparagine 328 and glycine 330 each coordinate N-formimidoyl-L-glutamate. Serine 331 serves as a coordination point for 4-imidazolone-5-propanoate.

This sequence belongs to the metallo-dependent hydrolases superfamily. HutI family. The cofactor is Zn(2+). Requires Fe(3+) as cofactor.

The protein localises to the cytoplasm. The enzyme catalyses 4-imidazolone-5-propanoate + H2O = N-formimidoyl-L-glutamate. It participates in amino-acid degradation; L-histidine degradation into L-glutamate; N-formimidoyl-L-glutamate from L-histidine: step 3/3. Catalyzes the hydrolytic cleavage of the carbon-nitrogen bond in imidazolone-5-propanoate to yield N-formimidoyl-L-glutamate. It is the third step in the universal histidine degradation pathway. This is Imidazolonepropionase from Clostridium tetani (strain Massachusetts / E88).